The sequence spans 357 residues: MQVQLTNRQQHILWATVRHYIATAEPVGSKALIEEYDLGVSSATIRNVMGVLEKSGLLYQPHTSAGRVPSDSGYRIYVDKLITPSEVLAKEVESALQQRLQWEDWSLEILLQGAAQILASLSGCISLITMPQTNTATVRHLQLMQIEAGRIMLILVTDNYETHSKLMDLPPGRSEKPDPEVIDRELQIVSNFLNSHLRGRSLLEITTLDWSQLDREFQLYGEFLKTSVAGLANRTAAPAATQIMVRGVAEVLRQPEFSQLQQVQTIIQLLEEEQEQLWRLIFEEPELEDTNKSKVTVRIGAENPLEPIRTCSLISSTYRRGAVPLGSVGSSRPSRLDYENAIAVVAAAADYLSEAFS.

It belongs to the HrcA family.

Its function is as follows. Negative regulator of class I heat shock genes (grpE-dnaK-dnaJ and groELS operons). Prevents heat-shock induction of these operons. This Anabaena sp. (strain L31) protein is Heat-inducible transcription repressor HrcA.